The primary structure comprises 370 residues: Immunoglobulin superfamily member 5 (370 aa).

Positions 1 to 24 (MEGSWRDVLAVLVILAQLTASGSS) are cleaved as a signal peptide. Ig-like V-type domains are found at residues 25-125 (YQII…LSVQ) and 128-215 (GTLN…KSLT). The Extracellular segment spans residues 25 to 239 (YQIIEGPQNV…EEGPALPTWA (215 aa)). 2 N-linked (GlcNAc...) asparagine glycosylation sites follow: N33 and N45. The cysteines at positions 46 and 109 are disulfide-linked. Residues N146, N196, and N217 are each glycosylated (N-linked (GlcNAc...) asparagine). Residues C149 and C201 are joined by a disulfide bond. The chain crosses the membrane as a helical span at residues 240 to 260 (IILLAVAFSLLLILIIVLIII). The Cytoplasmic portion of the chain corresponds to 261-370 (FCCCCASRRE…PQKVRNVTLV (110 aa)). Residues 284–359 (ANMRTNKADP…THPRVSFDIA (76 aa)) form a disordered region. Basic and acidic residues predominate over residues 289 to 301 (NKADPETKLKGGK).

This sequence belongs to the immunoglobulin superfamily. Interacts with MAGI1 at tight junctions, forms a tripartite complex with NPHS1. Interacts with LNX1 isoform 2 via its PDZ 2 domain, it may also interact with other isoforms containing this domain. In terms of processing, N-glycosylated. As to expression, localized to kidney glomeruli and small intestinal epithelial cells. In kidney glomeruli, it is localized at slit diaphragm. Also found in spermatogonia, gonocytes, hematopoietic stem cells and Sertoli cells.

The protein localises to the apical cell membrane. Its subcellular location is the cell junction. It localises to the tight junction. In terms of biological role, provides, together with MAGI1, an adhesion machinery at tight junctions, which may regulate the permeability of kidney glomerulus and small intestinal epithelial cells. Mediates calcium-independent homophilic cell adhesion. In testis, it may function as a cell adhesion molecule rather than a tight-junction protein. It may participate in the adhesion between spermatogonia-spermatogonia, spermatogonia-Sertoli cells, and Sertoli cells-Sertoli cells. This chain is Immunoglobulin superfamily member 5 (Igsf5), found in Mus musculus (Mouse).